The primary structure comprises 280 residues: GTP-binding protein rhoC (280 aa).

Residues 13 to 59 (TSRRHSLVTPPPSVAPRQNRMRSQSVRVSNGTVSTDNSMSSGRVSEA) are disordered. Positions 33 to 59 (MRSQSVRVSNGTVSTDNSMSSGRVSEA) are enriched in polar residues. 76 to 83 (GDGGCGKT) is a binding site for GTP. The short motif at 98–106 (YVPTVFENY) is the Effector region element. GTP-binding positions include 125–129 (DTAGQ) and 183–186 (LKSD). Positions 251–275 (WDTRLPSSSGKPGGKPIGGKKIKKR) are disordered. Cys-277 carries the post-translational modification Cysteine methyl ester. A lipid anchor (S-geranylgeranyl cysteine) is attached at Cys-277. Residues 278–280 (KIL) constitute a propeptide, removed in mature form.

This sequence belongs to the small GTPase superfamily. Rho family.

The protein resides in the cell membrane. This is GTP-binding protein rhoC (rhoC) from Emericella nidulans (strain FGSC A4 / ATCC 38163 / CBS 112.46 / NRRL 194 / M139) (Aspergillus nidulans).